The primary structure comprises 500 residues: Protein dcd1B (500 aa).

Positions 1-20 are cleaved as a signal peptide; sequence MNLIKLFIICCLLISITVKS. 6 N-linked (GlcNAc...) asparagine glycosylation sites follow: asparagine 284, asparagine 331, asparagine 441, asparagine 459, asparagine 474, and asparagine 475. A disordered region spans residues 464–500; the sequence is FSEQPPLPPPNNSSSSDSNSNSNSDSSSSSDSNSNSN. The segment covering 475–500 has biased composition (low complexity); it reads NSSSSDSNSNSNSDSSSSSDSNSNSN.

It is found in the secreted. This is Protein dcd1B (dcd1B) from Dictyostelium discoideum (Social amoeba).